Here is a 333-residue protein sequence, read N- to C-terminus: Phosphate acyltransferase (333 aa).

This sequence belongs to the PlsX family. Homodimer. Probably interacts with PlsY.

Its subcellular location is the cytoplasm. The enzyme catalyses a fatty acyl-[ACP] + phosphate = an acyl phosphate + holo-[ACP]. Its pathway is lipid metabolism; phospholipid metabolism. Catalyzes the reversible formation of acyl-phosphate (acyl-PO(4)) from acyl-[acyl-carrier-protein] (acyl-ACP). This enzyme utilizes acyl-ACP as fatty acyl donor, but not acyl-CoA. The sequence is that of Phosphate acyltransferase from Lactobacillus acidophilus (strain ATCC 700396 / NCK56 / N2 / NCFM).